The following is a 371-amino-acid chain: 4-hydroxy-3-methylbut-2-en-1-yl diphosphate synthase (flavodoxin) (371 aa).

[4Fe-4S] cluster contacts are provided by Cys270, Cys273, Cys305, and Glu312.

Belongs to the IspG family. [4Fe-4S] cluster serves as cofactor.

It carries out the reaction (2E)-4-hydroxy-3-methylbut-2-enyl diphosphate + oxidized [flavodoxin] + H2O + 2 H(+) = 2-C-methyl-D-erythritol 2,4-cyclic diphosphate + reduced [flavodoxin]. Its pathway is isoprenoid biosynthesis; isopentenyl diphosphate biosynthesis via DXP pathway; isopentenyl diphosphate from 1-deoxy-D-xylulose 5-phosphate: step 5/6. In terms of biological role, converts 2C-methyl-D-erythritol 2,4-cyclodiphosphate (ME-2,4cPP) into 1-hydroxy-2-methyl-2-(E)-butenyl 4-diphosphate. The protein is 4-hydroxy-3-methylbut-2-en-1-yl diphosphate synthase (flavodoxin) of Shewanella loihica (strain ATCC BAA-1088 / PV-4).